The following is a 151-amino-acid chain: Putative coiled-coil-helix-coiled-coil-helix domain-containing protein CHCHD2P9, mitochondrial (151 aa).

A mitochondrion-targeting transit peptide spans 1 to 9; that stretch reads MPRGSRSRT. Disordered stretches follow at residues 1–50 and 75–110; these read MPRG…AAAP and TQGHAVTGGFSGGSNAEPARPDIAYQEPQGTQPAQQ. Residues 10–26 show a composition bias toward low complexity; that stretch reads SRMAPPASRAPQMRAAP. Positions 27-38 are enriched in pro residues; sequence RPAPVAQPPAAA. Composition is skewed to low complexity over residues 39 to 50 and 100 to 110; these read PPSAVGSSAAAP and QEPQGTQPAQQ. A CHCH domain is found at 111 to 151; sequence QQPCFYGIKQFLECAQNQGDIKLCEDFSKVLKQCRLAKGLA. 2 consecutive short sequence motifs (cx9C motif) follow at residues 114-124 and 134-144; these read CFYGIKQFLEC and CEDFSKVLKQC. 2 disulfide bridges follow: Cys114/Cys144 and Cys124/Cys134.

Its subcellular location is the mitochondrion. The sequence is that of Putative coiled-coil-helix-coiled-coil-helix domain-containing protein CHCHD2P9, mitochondrial (CHCHD2P9) from Homo sapiens (Human).